Here is a 484-residue protein sequence, read N- to C-terminus: Polyamine oxidase 3 (484 aa).

FAD is bound by residues glutamate 47, arginine 55, valine 236, and glutamate 423. The short motif at 482-484 is the Microbody targeting signal element; that stretch reads SRL.

Belongs to the flavin monoamine oxidase family. FAD serves as cofactor. Widely expressed.

Its subcellular location is the peroxisome. The catalysed reaction is spermine + O2 + H2O = 3-aminopropanal + spermidine + H2O2. It catalyses the reaction N(1)-acetylspermine + O2 + H2O = 3-acetamidopropanal + spermidine + H2O2. It carries out the reaction norspermine + O2 + H2O = norspermidine + 3-aminopropanal + H2O2. The enzyme catalyses spermidine + O2 + H2O = 3-aminopropanal + putrescine + H2O2. The catalysed reaction is thermospermine + O2 + H2O = 3-aminopropanal + spermidine + H2O2. It functions in the pathway amine and polyamine degradation; spermine degradation. Its pathway is amine and polyamine degradation; spermidine degradation. Flavoenzyme involved in polyamine back-conversion. Catalyzes the oxidation of the secondary amino group of polyamines, such as spermine, spermidine and their acetyl derivatives. Substrate preference is spermidine &gt; norspermine &gt; thermospermine &gt; N(1)-acetylspermine &gt; spermine. No activity detected when putrescine is used as substrate. Plays an important role in the regulation of polyamine intracellular concentration. In Oryza sativa subsp. japonica (Rice), this protein is Polyamine oxidase 3.